The following is a 479-amino-acid chain: B-cell CLL/lymphoma 6 member B protein (479 aa).

A BTB domain is found at 38-105 (TDVTLLVGGQ…MYTSRLRLSP (68 aa)). 2 disordered regions span residues 143 to 190 (RPLE…PDPK) and 210 to 259 (GSLV…LSPT). The segment covering 147–160 (AEPPTPPTAPPPGS) has biased composition (pro residues). Positions 162–172 (RRSEGHPDPPT) are enriched in basic and acidic residues. Residues 234–244 (SSSSSSSSSSS) are compositionally biased toward low complexity. C2H2-type zinc fingers lie at residues 328–350 (YKCQ…RTVH), 356–378 (YHCS…SRIH), 384–406 (YKCE…VLIH), 412–434 (YPCP…VRIH), and 440–463 (YHCD…RQKH).

In terms of assembly, associates with BCL6 through the BTB domain. In terms of tissue distribution, ubiquitously expressed with higher expression found in heart and placenta.

Its subcellular location is the nucleus. Its function is as follows. Acts as a sequence-specific transcriptional repressor in association with BCL6. May function in a narrow stage or be related to some events in the early B-cell development. The sequence is that of B-cell CLL/lymphoma 6 member B protein (BCL6B) from Homo sapiens (Human).